Consider the following 1595-residue polypeptide: Collagen-like protein 2 (1595 aa).

N87 and N134 each carry an N-linked (GlcNAc...) asparagine; by host glycan. 4 Collagen-like domains span residues 97 to 155 (LRGE…NGDV), 175 to 233 (QVGL…KGEG), 236 to 295 (GSKG…KGDI), and 299 to 358 (GIKG…KGMK). The segment covering 181-190 (SQGDQGYKGD) has biased composition (low complexity). Disordered stretches follow at residues 181–577 (SQGD…SPDL) and 604–1326 (TDIK…GIKG). Basic and acidic residues-rich tracts occupy residues 191-200 (QGSKGDKGQK), 209-448 (KGDK…KGTK), 456-466 (YKGDIGDKGIK), 474-501 (DKGDKGIKGDKGDKGIKGDDGSKGDKGY), 510-561 (DNGE…DKGE), 606-615 (IKGEKGDKGE), 622-702 (KGDK…DKGD), 718-825 (KGDK…DKGI), 832-883 (KGDK…KGFK), 895-1041 (KGDK…DKGI), 1048-1098 (KGNK…DQGT), 1107-1151 (KGDK…KGIK), 1159-1250 (NKGD…KGDQ), and 1265-1300 (KGDKGDKGDKGDKGDKGDKGAKGDKGDKGDKGDQGI). N-linked (GlcNAc...) asparagine; by host glycans are attached at residues N274, N280, and N286. Residues N373, N382, N400, and N409 are each glycosylated (N-linked (GlcNAc...) asparagine; by host). 5 consecutive Collagen-like domains span residues 380–559 (GDNG…KGDK), 608–907 (GEKG…KGEN), 920–1039 (GDKG…KGDK), 1043–1102 (GTNG…KGET), and 1128–1307 (GDQG…SGAS). 3 N-linked (GlcNAc...) asparagine; by host glycosylation sites follow: N1345, N1420, and N1545. Positions 1538 to 1585 (SAFDKGGNGSIRFNPPSSGTKGSGGGGSVQGGGGTIPNDGYPGGNGGP) are disordered. Gly residues predominate over residues 1558–1585 (KGSGGGGSVQGGGGTIPNDGYPGGNGGP).

May be hydroxylated on lysine by the viral-encoded procollagen-lysine,2-oxoglutarate 5-dioxygenase.

Its subcellular location is the virion. Its function is as follows. May participate in the formation of a layer of cross-linked glycosylated fibrils at the viral surface thus giving it a hairy-like appearance. In Acanthamoeba polyphaga (Amoeba), this protein is Collagen-like protein 2.